The primary structure comprises 237 residues: Ribose-5-phosphate isomerase A (237 aa).

Substrate contacts are provided by residues 33–36 (TGST), 90–93 (DGAD), and 103–106 (KGGG). Glu112 functions as the Proton acceptor in the catalytic mechanism. Residue Lys130 participates in substrate binding.

Belongs to the ribose 5-phosphate isomerase family. In terms of assembly, homodimer.

It carries out the reaction aldehydo-D-ribose 5-phosphate = D-ribulose 5-phosphate. It participates in carbohydrate degradation; pentose phosphate pathway; D-ribose 5-phosphate from D-ribulose 5-phosphate (non-oxidative stage): step 1/1. Catalyzes the reversible conversion of ribose-5-phosphate to ribulose 5-phosphate. This is Ribose-5-phosphate isomerase A from Trichodesmium erythraeum (strain IMS101).